Here is a 376-residue protein sequence, read N- to C-terminus: Lateral eye opsin (376 aa).

At 1-46 (MANQLSYSSLGWPYQPNASVVDTMPKEMLYMIHEHWYAFPPMNPLW) the chain is on the extracellular side. Residue Asn17 is glycosylated (N-linked (GlcNAc...) asparagine). Residues 47–71 (YSILGVAMIILGIICVLGNGMVIYL) form a helical membrane-spanning segment. The Cytoplasmic segment spans residues 72-83 (MMTTKSLRTPTN). Residues 84-108 (LLVVNLAFSDFCMMAFMMPTMTSNC) traverse the membrane as a helical segment. Topologically, residues 109-123 (FAETWILGPFMCEVY) are extracellular. A disulfide bond links Cys120 and Cys197. The helical transmembrane segment at 124 to 143 (GMAGSLFGCASIWSMVMITL) threads the bilayer. Over 144–162 (DRYNVIVRGMAAAPLTHKK) the chain is Cytoplasmic. A helical membrane pass occupies residues 163-186 (ATLLLLFVWIWSGGWTILPFFGWS). The Extracellular portion of the chain corresponds to 187–210 (RYVPEGNLTSCTVDYLTKDWSSAS). The N-linked (GlcNAc...) asparagine glycan is linked to Asn193. The helical transmembrane segment at 211 to 238 (YVVIYGLAVYFLPLITMIYCYFFIVHAV) threads the bilayer. Residues 239–274 (AEHEKQLREQAKKMNVASLRANADQQKQSAECRLAK) are Cytoplasmic-facing. A helical transmembrane segment spans residues 275 to 298 (VAMMTVGLWFMAWTPYLIISWAGV). Topologically, residues 299–306 (FSSGTRLT) are extracellular. A helical transmembrane segment spans residues 307–331 (PLATIWGSVFAKANSCYNPIVYGIS). N6-(retinylidene)lysine is present on Lys318. At 332–376 (HPRYKAALYQRFPSLACGSGESGSDVKSEASATTTMEEKPKIPEA) the chain is on the cytoplasmic side. The segment at 349–376 (GSGESGSDVKSEASATTTMEEKPKIPEA) is disordered. Positions 367 to 376 (MEEKPKIPEA) are enriched in basic and acidic residues.

It belongs to the G-protein coupled receptor 1 family. Opsin subfamily. Phosphorylated on some or all of the serine and threonine residues present in the C-terminal region. Lateral eye.

It is found in the membrane. Visual pigments are the light-absorbing molecules that mediate vision. They consist of an apoprotein, opsin, covalently linked to cis-retinal. The chain is Lateral eye opsin from Limulus polyphemus (Atlantic horseshoe crab).